A 67-amino-acid chain; its full sequence is Beta-defensin 123 (67 aa).

Positions 1-20 are cleaved as a signal peptide; sequence MKLLLLTLTVLLLLSQLTPG. Cystine bridges form between Cys-25-Cys-52, Cys-32-Cys-46, and Cys-36-Cys-53.

This sequence belongs to the beta-defensin family.

Its subcellular location is the secreted. In terms of biological role, has antibacterial activity. The polypeptide is Beta-defensin 123 (DEFB123) (Gorilla gorilla gorilla (Western lowland gorilla)).